A 200-amino-acid polypeptide reads, in one-letter code: Large ribosomal subunit protein uL4 (200 aa).

The disordered stretch occupies residues 43–71 (RAQKTRAEVSGSGKKPWRQKGTGRARSGD).

Belongs to the universal ribosomal protein uL4 family. In terms of assembly, part of the 50S ribosomal subunit.

In terms of biological role, one of the primary rRNA binding proteins, this protein initially binds near the 5'-end of the 23S rRNA. It is important during the early stages of 50S assembly. It makes multiple contacts with different domains of the 23S rRNA in the assembled 50S subunit and ribosome. Its function is as follows. Forms part of the polypeptide exit tunnel. The protein is Large ribosomal subunit protein uL4 of Aggregatibacter actinomycetemcomitans (Actinobacillus actinomycetemcomitans).